A 706-amino-acid chain; its full sequence is Glutamine-dependent NAD(+) synthetase (706 aa).

The CN hydrolase domain occupies 5 to 275 (VTVATCALNQ…VEVLTATLDL (271 aa)). The active-site Proton acceptor; for glutaminase activity is the Glu45. Lys114 serves as the catalytic For glutaminase activity. The active-site Nucleophile; for glutaminase activity is the Cys175. Residues 325–706 (YHSPAEEISL…RQRQELDGVD (382 aa)) are ligase. Residue 355-362 (PLSGGVDS) participates in ATP binding. Ser357 is an active-site residue.

The protein in the C-terminal section; belongs to the NAD synthetase family. As to quaternary structure, homohexamer.

It catalyses the reaction deamido-NAD(+) + L-glutamine + ATP + H2O = L-glutamate + AMP + diphosphate + NAD(+) + H(+). The protein operates within cofactor biosynthesis; NAD(+) biosynthesis; NAD(+) from deamido-NAD(+) (L-Gln route): step 1/1. In terms of biological role, catalyzes the ATP-dependent amidation of deamido-NAD to form NAD. Uses L-glutamine as a nitrogen source. The sequence is that of Glutamine-dependent NAD(+) synthetase (NADSYN1) from Bos taurus (Bovine).